A 1012-amino-acid polypeptide reads, in one-letter code: Vacuolar membrane protease (1012 aa).

At 1–60 (MRRSTDPRNLLVRRGPLLVDGESAISELDPGFFPTGDAPKMSSTTRRRFNLIAFTPGPVT) the chain is on the cytoplasmic side. A helical membrane pass occupies residues 61–81 (VISSLVYLALLIPLLLVHTIV). Topologically, residues 82-432 (PSAPKSNPKG…SFAVFRLHTL (351 aa)) are vacuolar. N-linked (GlcNAc...) asparagine glycosylation is present at asparagine 159. Zn(2+) contacts are provided by histidine 215 and aspartate 227. Catalysis depends on glutamate 261, which acts as the Proton acceptor. Zn(2+)-binding residues include glutamate 262, glutamate 287, and histidine 360. Residues 433-453 (FAISVTLLVVCPIVLFVIGII) form a helical membrane-spanning segment. Residues 454-487 (LSKMDKMYLFSIHETIPETKEKVSVRGLRGLFRY) are Cytoplasmic-facing. A helical membrane pass occupies residues 488-508 (PIILVVSSGILIGLSYLLAKV). Over 509-518 (NPFIVHSSSY) the chain is Vacuolar. Residues 519 to 539 (AVWSMMLSSWIFMTWFLSCIA) traverse the membrane as a helical segment. Residues 540–550 (DFFRPSALHRA) are Cytoplasmic-facing. Residues 551–571 (YTFTWQLLVMWVLLVISTVYV) form a helical membrane-spanning segment. Residues 572–575 (NQHD) lie on the Vacuolar side of the membrane. Residues 576-596 (IAAGYFIVFYFAGTFLATLIS) traverse the membrane as a helical segment. The Cytoplasmic segment spans residues 597–710 (YLELFALPNK…WSASLPTWTW (114 aa)). The segment covering 614–629 (SQYPSRLGSNRSSRIL) has biased composition (polar residues). The tract at residues 614–660 (SQYPSRLGSNRSSRILSPSADELPTGGDNNGEIYDGEEEPTESSSLL) is disordered. Residues 711–731 (VLQFLFVGPVVIMFIGQLGLF) form a helical membrane-spanning segment. Topologically, residues 732–743 (LTSAMNQVGADG) are vacuolar. The chain crosses the membrane as a helical span at residues 744-764 (VGLLVVYIAIAVFSVLLLIPL). Residues 765–777 (SPFIHRFTYHVPT) are Cytoplasmic-facing. A helical membrane pass occupies residues 778–798 (FLLLVFIATLIYNLAAFPFSA). Residues 799–1012 (ENRLKIFFVQ…DGLVEVSRGF (214 aa)) are Vacuolar-facing. Asparagine 842 and asparagine 878 each carry an N-linked (GlcNAc...) asparagine glycan.

It belongs to the peptidase M28 family. Zn(2+) is required as a cofactor.

The protein localises to the vacuole membrane. In terms of biological role, may be involved in vacuolar sorting and osmoregulation. The protein is Vacuolar membrane protease of Coccidioides posadasii (strain RMSCC 757 / Silveira) (Valley fever fungus).